The sequence spans 149 residues: MSIELILWLFSFASIMVLIGLTAYQLICLSDLEFDYINPYDSSSRINSVVLIEYALQGALCASFLLTLHWFPFLVMAPVAYYHGKLYMDRKHLVDVTEIFRQLNWEKKYRMIKLAFYFSLFIITIYRLVMTAVTLFIDEDANLVDTRTI.

3 consecutive transmembrane segments (helical) span residues 3–23 (IELI…GLTA), 59–79 (ALCA…MAPV), and 117–137 (YFSL…TLFI).

It belongs to the cornichon family.

The protein resides in the endoplasmic reticulum membrane. It is found in the golgi apparatus membrane. In terms of biological role, acts as a cargo receptor necessary for the transportation of secretory proteins from the endoplasmic reticulum (ER) in COPII-coated vesicles targeted to the Golgi apparatus. This is Protein cornichon homolog 2 from Oryza sativa subsp. japonica (Rice).